We begin with the raw amino-acid sequence, 330 residues long: Glycerol-3-phosphate dehydrogenase [NAD(P)+] (330 aa).

Residues Ser-14, Phe-15, Arg-35, and Lys-109 each contribute to the NADPH site. The sn-glycerol 3-phosphate site is built by Lys-109 and Gly-137. Position 141 (Ala-141) interacts with NADPH. Lys-192, Asp-248, Ser-258, Arg-259, and Asn-260 together coordinate sn-glycerol 3-phosphate. The active-site Proton acceptor is Lys-192. Arg-259 lines the NADPH pocket. Positions 283 and 285 each coordinate NADPH.

Belongs to the NAD-dependent glycerol-3-phosphate dehydrogenase family.

It is found in the cytoplasm. It carries out the reaction sn-glycerol 3-phosphate + NAD(+) = dihydroxyacetone phosphate + NADH + H(+). It catalyses the reaction sn-glycerol 3-phosphate + NADP(+) = dihydroxyacetone phosphate + NADPH + H(+). It functions in the pathway membrane lipid metabolism; glycerophospholipid metabolism. Functionally, catalyzes the reduction of the glycolytic intermediate dihydroxyacetone phosphate (DHAP) to sn-glycerol 3-phosphate (G3P), the key precursor for phospholipid synthesis. In Rickettsia massiliae (strain Mtu5), this protein is Glycerol-3-phosphate dehydrogenase [NAD(P)+].